The sequence spans 729 residues: Probable pre-mRNA-splicing factor ATP-dependent RNA helicase DEAH3 (729 aa).

Positions 75 to 244 (LNTLNSNQTL…FSGAPLMKVP (170 aa)) constitute a Helicase ATP-binding domain. 88–95 (GETGSGKT) serves as a coordination point for ATP. Positions 191 to 194 (DEAH) match the DEAH box motif. Residues 269–449 (TVVQIHMCEP…NTVLTLKKLG (181 aa)) enclose the Helicase C-terminal domain.

This sequence belongs to the DEAD box helicase family. DEAH subfamily. PRP43 sub-subfamily.

It catalyses the reaction ATP + H2O = ADP + phosphate + H(+). In terms of biological role, may be involved in pre-mRNA splicing. This is Probable pre-mRNA-splicing factor ATP-dependent RNA helicase DEAH3 from Arabidopsis thaliana (Mouse-ear cress).